A 308-amino-acid polypeptide reads, in one-letter code: tRNA dimethylallyltransferase (308 aa).

G14–T21 provides a ligand contact to ATP. A substrate-binding site is contributed by T16 to T21. 3 interaction with substrate tRNA regions span residues D39–L42, Q163–R167, and R244–R249.

This sequence belongs to the IPP transferase family. In terms of assembly, monomer. Requires Mg(2+) as cofactor.

It carries out the reaction adenosine(37) in tRNA + dimethylallyl diphosphate = N(6)-dimethylallyladenosine(37) in tRNA + diphosphate. Its function is as follows. Catalyzes the transfer of a dimethylallyl group onto the adenine at position 37 in tRNAs that read codons beginning with uridine, leading to the formation of N6-(dimethylallyl)adenosine (i(6)A). In Shewanella halifaxensis (strain HAW-EB4), this protein is tRNA dimethylallyltransferase.